Consider the following 450-residue polypeptide: Beclin-1 (450 aa).

M1 bears the N-acetylmethionine mark. Phosphoserine is present on residues S15 and S30. Residues 48 to 72 form a disordered region; sequence TTAQAKPGETQEEETNSGEEPFIET. 3 positions are modified to phosphoserine; by AMPK: S90, S93, and S96. Residues 108–127 carry the BH3 motif; the sequence is TMENLSRRLKVTGDLFDIMS. The interaction with BCL2 and BCL2L1 stretch occupies residues 112-159; the sequence is LSRRLKVTGDLFDIMSGQTDVDHPLCEECTDTLLDQLDTQLNVTENEC. T119 bears the Phosphothreonine; by DAPK1 mark. Residues 142 to 269 adopt a coiled-coil conformation; that stretch reads DTLLDQLDTQ…QLDKLKKTNV (128 aa). Residues 245–450 form an evolutionary conserved domain (ECD) region; the sequence is DELKSVENQM…AWVSSQFYNK (206 aa). Residues K402 and K437 each participate in a glycyl lysine isopeptide (Lys-Gly) (interchain with G-Cter in ubiquitin) cross-link. Residues 425-450 are required for membrane-association; it reads WTKALKFMLTNLKWGLAWVSSQFYNK.

The protein belongs to the beclin family. In terms of assembly, a homodimeric form is proposed to exist; this metastable form readily transits to ATG14- or UVRAG-containing complexes with BECN1:UVRAG being more stable than BECN1:ATG14. Component of the PI3K (PI3KC3/PI3K-III/class III phosphatidylinositol 3-kinase) complex the core of which is composed of the catalytic subunit PIK3C3, the regulatory subunit PIK3R4 and BECN1 associating with additional regulatory/auxiliary subunits to form alternative complex forms. Alternative complex forms containing a fourth regulatory subunit in a mutually exclusive manner are PI3K complex I (PI3KC3-C1) containing ATG14, and PI3K complex II (PI3KC3-C2) containing UVRAG. PI3KC3-C1 displays a V-shaped architecture with PIK3R4 serving as a bridge between PIK3C3 and the ATG14:BECN1 subcomplex. Both, PI3KC3-C1 and PI3KC3-C2, can associate with further regulatory subunits, such as RUBCN, SH3GLB1/Bif-1 and AMBRA1. PI3KC3-C1 probably associates with PIK3CB. Forms a complex with PPP2CA and AMBRA1; AMBRA1 and BECN1 components of the complex regulate MYC stability via different pathways. Component of the complex, at least composed of LRPPRC, BECN1 and BCL2; the interactions prevent BECN1 from forming an autophagy-inducing complex with PIK3C3. Interacts with AMBRA1, GOPC, GRID2. Interacts with BCL2 and BCL2L1 isoform Bcl-X(L); the interaction inhibits BECN1 function in promoting autophagy by interfering with the formation of the PI3K complex. Interacts with cytosolic HMGB1; inhibits the interaction of BECN1 and BCL2 leading to promotion of autophagy. Interacts with USP10, USP13, VMP1, DAPK1, RAB39A. Interacts with the poly-Gln domain of ATXN3; the interaction causes deubiquitination at Lys-402 and stabilizes BECN1. Interacts with SLAMF1. Interacts with TRIM5; the interaction causes activation of BECN1 by causing its dissociation from its inhibitors BCL2 and TAB2. Interacts with active ULK1 (phosphorylated on 'Ser-317') and MEFV simultaneously. Interacts with WDR81 and WDR91; negatively regulates the PI3 kinase/PI3K activity associated with endosomal membranes. Interacts with LAPTM4B; competes with EGFR for LAPTM4B binding; regulates EGFR activity. Interacts with TRIM50. Interacts with TRIM16. Interacts with ATG14; this interaction is increased in the absence of TMEM39A. Interacts with WASHC1; preventing interaction with AMBRA1 and the DCX(AMBRA1) complex and subsequent ubiquitination. Interacts with TRIM17. Interacts with BCL2L10/BCL-B (via BH1 domain). Interacts with SH3BGRL. Interacts with IRGM; enhancing BECN1-interacting partners and influencing the composition of the BECN1 complex. Interacts with ARMC3. Interacts with LRPPRC. Phosphorylation at Thr-119 by DAPK1 reduces its interaction with BCL2 and BCL2L1 and promotes induction of autophagy. In response to autophagic stimuli, phosphorylated at serine residues by AMPK in an ATG14-dependent manner, and this phosphorylation is critical for maximally efficient autophagy. In terms of processing, polyubiquitinated by NEDD4, both with 'Lys-11'- and 'Lys-63'-linkages. 'Lys-11'-linked polyubiquitination leads to degradation and is enhanced when the stabilizing interaction partner VPS34 is depleted. Deubiquitinated by USP10 and USP13, leading to stabilize the PIK3C3/VPS34-containing complexes. Polyubiquitinated at Lys-402 with 'Lys-48'-linkages. 'Lys-48'-linked polyubiquitination of Lys-402 leads to degradation. Deubiquitinated by ATXN3, leading to stabilization. Ubiquitinated at Lys-437 via 'Lys-63'-linkage by the DCX(AMBRA1) complex, thereby increasing the association between BECN1 and PIK3C3 to promote PIK3C3 activity. 'Lys-48'-linked ubiquitination by RNF216 leads to proteasomal degradation and autophagy inhibition. Post-translationally, proteolytically processed by caspases including CASP8 and CASP3; the C-terminal fragments lack autophagy-inducing capacity and are proposed to induce apoptosis. Thus the cleavage is proposed to be an determinant to switch from autophagy to apoptosis pathways affecting cellular homeostasis including viral infections and survival of tumor cells.

The protein resides in the cytoplasm. It is found in the golgi apparatus. The protein localises to the trans-Golgi network membrane. It localises to the endosome membrane. Its subcellular location is the endoplasmic reticulum membrane. The protein resides in the mitochondrion membrane. It is found in the cytoplasmic vesicle. The protein localises to the autophagosome. It localises to the mitochondrion. Its subcellular location is the nucleus. In terms of biological role, plays a central role in autophagy. Acts as a core subunit of the PI3K complex that mediates formation of phosphatidylinositol 3-phosphate; different complex forms are believed to play a role in multiple membrane trafficking pathways: PI3KC3-C1 is involved in initiation of autophagosomes and PI3KC3-C2 in maturation of autophagosomes and endocytosis. Involved in regulation of degradative endocytic trafficking and required for the abscission step in cytokinesis, probably in the context of PI3KC3-C2. Essential for the formation of PI3KC3-C2 but not PI3KC3-C1 PI3K complex forms. Involved in endocytosis. May play a role in antiviral host defense. Functionally, beclin-1-C 35 kDa localized to mitochondria can promote apoptosis; it induces the mitochondrial translocation of BAX and the release of proapoptotic factors. The protein is Beclin-1 (BECN1) of Pongo abelii (Sumatran orangutan).